Consider the following 665-residue polypeptide: MVDVLAHESELLGLVKEYLDFAEFEDTLKTFLKECKIKGKPLSKSTCGSLRDPKSLKFQRDLLAAFDSGDQKVFFRLWEEHIPRPIRDGDSLAQKLEFYLHIHFAIYLLKHSAGRPDKEDLDERISYFKTFLETKGAALSQTTEFLPFYALPFVPNPMAHPSFKELFQDSWTSELKLKLEKFLALMFKASNTPKLLTLYKENGQSNKDVLQQLHQQLVEAERRSMTYLKRYNRIQADYHNLIGVTAELVDSLEATVSGKMITPEYLQSVCVRLFSNQMRQSLAHSVDFTRPGTASTMLRASLAPVKLKDVPLLPSLDYEKLKKDLILGSDRLKAFLLQALRWRLTTSHPGEQRETVLQAYISNDLLDCHSHSQRSVLQLLQSKSEVVRQYTARLINAFASLAEGRRYLAQSTKVLRMLEERLKEEDKDVITRENVLGALQKFSLRRPLQTAMIQDGLIFWLIDILKEPDCLSDYTLEYSVALLMNLCLRSAGKNMCAKVAGLVLKVLSDLLGHENHEIQPYVNGALYSILSIPSIREEARAMGMEDILRCFIKEGNAEMIRQIEFIIKQLNAEELLDGVLESDDDEDEDDEEDHDTMEADLDKDELIQPQLGELSGEKLLTTEYLGIMTNTGKARRRGTAGVQWGGPEPLRRPVTPGGHRTGYPA.

Positions 7-39 constitute a LisH domain; it reads HESELLGLVKEYLDFAEFEDTLKTFLKECKIKG. Positions 204–235 form a coiled coil; that stretch reads QSNKDVLQQLHQQLVEAERRSMTYLKRYNRIQ. Serine 582 carries the phosphoserine modification. Acidic residues predominate over residues 582–603; that stretch reads SDDDEDEDDEEDHDTMEADLDK. 2 disordered regions span residues 582-604 and 636-665; these read SDDD…LDKD and RRGT…GYPA.

As to quaternary structure, interacts with TOGARAM1, CCDC66, CEP104, CSPP1 and CEP290. Interacts with NDUFAF2.

It localises to the cytoplasm. It is found in the cytoskeleton. The protein resides in the cilium basal body. The protein localises to the cell projection. Its subcellular location is the cilium. It localises to the microtubule organizing center. It is found in the centrosome. The protein resides in the centriole. Involved in ciliogenesis. It is required for appropriate acetylation and polyglutamylation of ciliary microtubules, and regulation of cilium length. Acts as a positive regulator of hedgehog (Hh)signaling. May participate in the trafficking and/or retention of GLI2 and GLI3 proteins at the ciliary tip. In Bos taurus (Bovine), this protein is LisH domain-containing protein ARMC9 (ARMC9).